The primary structure comprises 398 residues: Elongation factor Tu (398 aa).

One can recognise a tr-type G domain in the interval 10–208; that stretch reads KPHVNVGTIG…ALDDYIPEPE (199 aa). The interval 19-26 is G1; it reads GHVDHGKT. Position 19-26 (19-26) interacts with GTP; it reads GHVDHGKT. Thr-26 lines the Mg(2+) pocket. Positions 61-65 are G2; the sequence is GITIA. The interval 82–85 is G3; it reads DCPG. GTP contacts are provided by residues 82–86 and 137–140; these read DCPGH and NKAD. The interval 137–140 is G4; the sequence is NKAD. The interval 175 to 177 is G5; that stretch reads SAL.

This sequence belongs to the TRAFAC class translation factor GTPase superfamily. Classic translation factor GTPase family. EF-Tu/EF-1A subfamily. As to quaternary structure, monomer.

The protein localises to the cytoplasm. The catalysed reaction is GTP + H2O = GDP + phosphate + H(+). Functionally, GTP hydrolase that promotes the GTP-dependent binding of aminoacyl-tRNA to the A-site of ribosomes during protein biosynthesis. In Marinobacter nauticus (strain ATCC 700491 / DSM 11845 / VT8) (Marinobacter aquaeolei), this protein is Elongation factor Tu.